The following is a 325-amino-acid chain: Acetyl-coenzyme A carboxylase carboxyl transferase subunit alpha (325 aa).

The region spanning 44–298 (QLEGRAEQLR…KTAILSNLEE (255 aa)) is the CoA carboxyltransferase C-terminal domain.

Belongs to the AccA family. In terms of assembly, acetyl-CoA carboxylase is a heterohexamer composed of biotin carboxyl carrier protein (AccB), biotin carboxylase (AccC) and two subunits each of ACCase subunit alpha (AccA) and ACCase subunit beta (AccD).

Its subcellular location is the cytoplasm. It catalyses the reaction N(6)-carboxybiotinyl-L-lysyl-[protein] + acetyl-CoA = N(6)-biotinyl-L-lysyl-[protein] + malonyl-CoA. Its pathway is lipid metabolism; malonyl-CoA biosynthesis; malonyl-CoA from acetyl-CoA: step 1/1. Its function is as follows. Component of the acetyl coenzyme A carboxylase (ACC) complex. First, biotin carboxylase catalyzes the carboxylation of biotin on its carrier protein (BCCP) and then the CO(2) group is transferred by the carboxyltransferase to acetyl-CoA to form malonyl-CoA. The sequence is that of Acetyl-coenzyme A carboxylase carboxyl transferase subunit alpha from Acaryochloris marina (strain MBIC 11017).